The following is a 219-amino-acid chain: Vacuolar protein sorting-associated protein 32 homolog 2 (219 aa).

2 coiled-coil regions span residues 10–41 (KQEA…KKAG) and 117–176 (TNID…QLLQ). Residues 168–219 (EELESQLLQPATTAPPLPSVPVPAGRQPARPVPQKRTAEEEELAALQAEMAL) form a disordered region.

This sequence belongs to the SNF7 family. As to quaternary structure, component of the endosomal sorting required for transport complex III (ESCRT-III), composed at least of VPS2, VPS20, VPS24 and VPS32. Interacts with SKD1. Interacts with BRO1/ALIX.

The protein localises to the endosome. Component of the ESCRT-III complex, which is required for multivesicular bodies (MVBs) formation and sorting of endosomal cargo proteins into MVBs. The ESCRT-III complex is probably involved in the concentration of MVB cargo. This is Vacuolar protein sorting-associated protein 32 homolog 2 (VPS32.2) from Arabidopsis thaliana (Mouse-ear cress).